The primary structure comprises 121 residues: Large ribosomal subunit protein bL20c (121 aa).

It belongs to the bacterial ribosomal protein bL20 family.

The protein localises to the plastid. Its subcellular location is the chloroplast. Its function is as follows. Binds directly to 23S ribosomal RNA and is necessary for the in vitro assembly process of the 50S ribosomal subunit. It is not involved in the protein synthesizing functions of that subunit. This is Large ribosomal subunit protein bL20c from Lotus japonicus (Lotus corniculatus var. japonicus).